The sequence spans 805 residues: Polyribonucleotide nucleotidyltransferase (805 aa).

Mg(2+) is bound by residues Asp491 and Asp497. One can recognise a KH domain in the interval 558-617; the sequence is PRMESMIIDKNKIKNVIGTGGKNVREICEKTGVKIEISQDGTVMIYAVSRDAVEEAKNMI. Residues 627 to 694 form the S1 motif domain; the sequence is GKVFSGVISE…DKDHVQLSMR (68 aa). Residues 702–805 form a disordered region; sequence DLLEHESYSS…GGGNKKPRFF (104 aa). A compositionally biased stretch (polar residues) spans 709–721; the sequence is YSSSKKNGPQSGD.

Belongs to the polyribonucleotide nucleotidyltransferase family. Requires Mg(2+) as cofactor.

It is found in the cytoplasm. The enzyme catalyses RNA(n+1) + phosphate = RNA(n) + a ribonucleoside 5'-diphosphate. Involved in mRNA degradation. Catalyzes the phosphorolysis of single-stranded polyribonucleotides processively in the 3'- to 5'-direction. This Anaplasma marginale (strain St. Maries) protein is Polyribonucleotide nucleotidyltransferase.